The sequence spans 1469 residues: uncharacterized protein (1469 aa).

Basic and acidic residues predominate over residues 146–180 (GDHITPKEEEEKEKEKEKEKEKEKEKEKEKEKDSE). Disordered stretches follow at residues 146-186 (GDHI…LQEQ), 231-255 (IQNNQNNQNNNDSPINKEIEDDNNN), 306-344 (TTTTTTTTTSSSNNCTNSISNTDKSTTTNCPPVENGGDS), 430-455 (LNFNNNNNNNNNNNNNNNNNSQPYHY), 520-560 (PVKN…NNNS), 654-706 (TTTT…PLVR), 719-755 (RTQTQLQTKIQPKSPQPQPTAAPEPQKPPTPSIVKNQ), 881-958 (YNNI…NIIN), and 1329-1369 (NCSS…NSSN). 5 stretches are compositionally biased toward low complexity: residues 232–241 (QNNQNNQNNN), 306–327 (TTTTTTTTTSSSNNCTNSISNT), 430–449 (LNFNNNNNNNNNNNNNNNNN), 523–559 (NNNNNNNNNNNNNNNNNNNNNNNNNNNNNNNNNINNN), and 654–693 (TTTTTTNTNSTNTNSTINATSPPHTPKLSSSPLLTTTTTP). Over residues 719-731 (RTQTQLQTKIQPK) the composition is skewed to polar residues. Residues 732 to 749 (SPQPQPTAAPEPQKPPTP) are compositionally biased toward pro residues. Composition is skewed to low complexity over residues 1329-1347 (NCSSSSSSSESNGIDSGSE) and 1354-1369 (RSNTTNNSNNINNSSN).

This is an uncharacterized protein from Dictyostelium discoideum (Social amoeba).